A 334-amino-acid polypeptide reads, in one-letter code: Methionine adenosyltransferase 2 subunit beta (334 aa).

NADP(+)-binding positions include 37-40, 60-62, 71-72, Cys-93, Arg-97, Tyr-159, and Leu-185; these read TGLL, FRR, and NL. Phosphothreonine is present on Thr-309. The tract at residues 319–334 is required for interaction with MAT2A; that stretch reads LWPFLIDKRWRQTVFH.

This sequence belongs to the dTDP-4-dehydrorhamnose reductase family. MAT2B subfamily. Heterotrimer; composed of a catalytic MAT2A homodimer that binds one regulatory MAT2B chain. Heterohexamer; composed of a central, catalytic MAT2A homotetramer flanked on either side by a regulatory MAT2B chain. NADP binding increases the affinity for MAT2A.

The protein operates within amino-acid biosynthesis; S-adenosyl-L-methionine biosynthesis; S-adenosyl-L-methionine from L-methionine: step 1/1. Its function is as follows. Regulatory subunit of S-adenosylmethionine synthetase 2, an enzyme that catalyzes the formation of S-adenosylmethionine from methionine and ATP. Regulates MAT2A catalytic activity by changing its kinetic properties, increasing its affinity for L-methionine. Can bind NADP (in vitro). The polypeptide is Methionine adenosyltransferase 2 subunit beta (Mat2b) (Mus musculus (Mouse)).